The chain runs to 718 residues: Gephyrin (718 aa).

Residues 1 to 19 (MSNTLTTERNITNSPTAAQ) are compositionally biased toward polar residues. The interval 1 to 26 (MSNTLTTERNITNSPTAAQLNEKESG) is disordered. Positions 31–176 (EWIVGVLTTS…LPGSVKAIRE (146 aa)) are MPT Mo-transferase. Low complexity predominate over residues 222–244 (NQNNQNNNNNNNNNNNNNNNNNS). 2 disordered regions span residues 222-266 (NQNN…SSYN) and 344-364 (TGEN…NDDD). The segment covering 245 to 254 (HNHHHHHHHS) has biased composition (basic residues). The interval 260-718 (KRGSSYNMTP…KAILIGPINN (459 aa)) is MPT adenylyltransferase.

The protein in the N-terminal section; belongs to the MoaB/Mog family. In the C-terminal section; belongs to the MoeA family. In terms of assembly, homotrimer, homodimer and homooligomer. It depends on Mg(2+) as a cofactor.

Its subcellular location is the cell membrane. The protein localises to the cytoplasm. It localises to the cytosol. It is found in the cytoskeleton. The catalysed reaction is molybdopterin + ATP + H(+) = adenylyl-molybdopterin + diphosphate. The enzyme catalyses adenylyl-molybdopterin + molybdate = Mo-molybdopterin + AMP + H(+). Its pathway is cofactor biosynthesis; molybdopterin biosynthesis. Functionally, microtubule-associated protein involved in membrane protein-cytoskeleton interactions. Also has a catalytic activity and catalyzes two steps in the biosynthesis of the molybdenum cofactor. In the first step, molybdopterin is adenylated. Subsequently, molybdate is inserted into adenylated molybdopterin and AMP is released. In Dictyostelium discoideum (Social amoeba), this protein is Gephyrin (gphn).